The sequence spans 325 residues: Germination protease (325 aa).

A propeptide spanning residues 1-7 (MYNVRTD) is cleaved from the precursor.

Belongs to the peptidase A25 family. As to quaternary structure, homotetramer. Autoproteolytically processed. The inactive tetrameric zymogen termed p46 autoprocesses to a smaller form termed p41, which is active only during spore germination.

It catalyses the reaction Endopeptidase action with P4 Glu or Asp, P1 preferably Glu &gt; Asp, P1' hydrophobic and P2' Ala.. Its function is as follows. Initiates the rapid degradation of small, acid-soluble proteins during spore germination. The protein is Germination protease of Clostridium perfringens (strain ATCC 13124 / DSM 756 / JCM 1290 / NCIMB 6125 / NCTC 8237 / Type A).